A 681-amino-acid chain; its full sequence is Methionine--tRNA ligase (681 aa).

Positions 14–24 (PYANGSIHLGH) match the 'HIGH' region motif. Zn(2+)-binding residues include Cys145, Cys148, Cys158, and Cys161. Positions 331–335 (KMSKS) match the 'KMSKS' region motif. Lys334 contacts ATP. Residues 579 to 681 (AFAAIDLRVA…SGAKPGQRIK (103 aa)) enclose the tRNA-binding domain.

Belongs to the class-I aminoacyl-tRNA synthetase family. MetG type 1 subfamily. In terms of assembly, homodimer. It depends on Zn(2+) as a cofactor.

Its subcellular location is the cytoplasm. It catalyses the reaction tRNA(Met) + L-methionine + ATP = L-methionyl-tRNA(Met) + AMP + diphosphate. In terms of biological role, is required not only for elongation of protein synthesis but also for the initiation of all mRNA translation through initiator tRNA(fMet) aminoacylation. This is Methionine--tRNA ligase from Pseudomonas fluorescens (strain ATCC BAA-477 / NRRL B-23932 / Pf-5).